We begin with the raw amino-acid sequence, 225 residues long: MSARIGVITFPGTLDDVDAVRAVRLAGAEAVNLWHADADLKQVDAVIVPGGFSYGDYLRAGAIARFAPVMGEVVRAAEQGMPVLGICNGFQVLCEAGLLPGALTRNEGLHFICRDQWLTVESVSTAWTSRYEPGAQILIPLKSGEGRYQAAPAVLDELEGEGRVVFRYSGDNPNGSQRGIAGISSANGRVVGLMPHPEHATEALTGPSDDGLGLFLSVLDTLVTA.

A Glutamine amidotransferase type-1 domain is found at 4–225 (RIGVITFPGT…LSVLDTLVTA (222 aa)). Cysteine 87 acts as the Nucleophile in catalysis. Catalysis depends on residues histidine 196 and glutamate 198.

In terms of assembly, part of the FGAM synthase complex composed of 1 PurL, 1 PurQ and 2 PurS subunits.

The protein localises to the cytoplasm. It carries out the reaction N(2)-formyl-N(1)-(5-phospho-beta-D-ribosyl)glycinamide + L-glutamine + ATP + H2O = 2-formamido-N(1)-(5-O-phospho-beta-D-ribosyl)acetamidine + L-glutamate + ADP + phosphate + H(+). It catalyses the reaction L-glutamine + H2O = L-glutamate + NH4(+). Its pathway is purine metabolism; IMP biosynthesis via de novo pathway; 5-amino-1-(5-phospho-D-ribosyl)imidazole from N(2)-formyl-N(1)-(5-phospho-D-ribosyl)glycinamide: step 1/2. Part of the phosphoribosylformylglycinamidine synthase complex involved in the purines biosynthetic pathway. Catalyzes the ATP-dependent conversion of formylglycinamide ribonucleotide (FGAR) and glutamine to yield formylglycinamidine ribonucleotide (FGAM) and glutamate. The FGAM synthase complex is composed of three subunits. PurQ produces an ammonia molecule by converting glutamine to glutamate. PurL transfers the ammonia molecule to FGAR to form FGAM in an ATP-dependent manner. PurS interacts with PurQ and PurL and is thought to assist in the transfer of the ammonia molecule from PurQ to PurL. The sequence is that of Phosphoribosylformylglycinamidine synthase subunit PurQ from Nocardia farcinica (strain IFM 10152).